We begin with the raw amino-acid sequence, 90 residues long: Putative regulatory protein Cbei_1140 (90 aa).

Belongs to the RemA family.

The sequence is that of Putative regulatory protein Cbei_1140 from Clostridium beijerinckii (strain ATCC 51743 / NCIMB 8052) (Clostridium acetobutylicum).